A 797-amino-acid chain; its full sequence is Protocadherin-3 (797 aa).

The signal sequence occupies residues 1-30 (METALAKIPQQRQVFFLTILSLLWKSSSEA). The Extracellular segment spans residues 31 to 691 (IRYSMPEETE…DNYDVLTLYL (661 aa)). Cadherin domains are found at residues 35–133 (MPEE…SPEF), 138–242 (MLLT…SPQF), 247–346 (YKVQ…APEL), 351–450 (LTVL…APAF), and 455–560 (YTMF…APFV). Asn169, Asn276, and Asn417 each carry an N-linked (GlcNAc...) asparagine glycan. Asn566 carries N-linked (GlcNAc...) asparagine glycosylation. Residues 567 to 670 (ASAPCTELLP…VVDGFSQPYL (104 aa)) form the Cadherin 6 domain. Residues 692-712 (VIALASVSSLFLLSVVLFVGV) traverse the membrane as a helical segment. At 713-797 (RLCRRAREAS…AVVHNSVGFY (85 aa)) the chain is on the cytoplasmic side.

Expressed in brain.

It is found in the cell membrane. Functionally, potential calcium-dependent cell-adhesion protein. May be involved in the establishment and maintenance of specific neuronal connections in the brain. This Rattus norvegicus (Rat) protein is Protocadherin-3 (Pcdh3).